The sequence spans 168 residues: ATP synthase subunit b (168 aa).

Residues 7-26 (FVLSNFIFTLINLWIMYWVL) traverse the membrane as a helical segment.

It belongs to the ATPase B chain family. F-type ATPases have 2 components, F(1) - the catalytic core - and F(0) - the membrane proton channel. F(1) has five subunits: alpha(3), beta(3), gamma(1), delta(1), epsilon(1). F(0) has three main subunits: a(1), b(2) and c(10-14). The alpha and beta chains form an alternating ring which encloses part of the gamma chain. F(1) is attached to F(0) by a central stalk formed by the gamma and epsilon chains, while a peripheral stalk is formed by the delta and b chains.

Its subcellular location is the cell membrane. F(1)F(0) ATP synthase produces ATP from ADP in the presence of a proton or sodium gradient. F-type ATPases consist of two structural domains, F(1) containing the extramembraneous catalytic core and F(0) containing the membrane proton channel, linked together by a central stalk and a peripheral stalk. During catalysis, ATP synthesis in the catalytic domain of F(1) is coupled via a rotary mechanism of the central stalk subunits to proton translocation. Its function is as follows. Component of the F(0) channel, it forms part of the peripheral stalk, linking F(1) to F(0). The sequence is that of ATP synthase subunit b from Alkaliphilus metalliredigens (strain QYMF).